Here is a 398-residue protein sequence, read N- to C-terminus: MQSLSLGQTSISKGLNYLTIMAPGNLWHMRNNFLFGSRCWMTRFSAENIFKSVSFRLFGVKCHNTDSEPLKNEDLLKNLLTMGVDIDMARKRQPGVFHRMITNEQDLKMFLLSKGASKEVIASIISRYPRAITRTPENLSKRWDLWRKIVTSDLEIVNILERSPESFFRSNNNLNLENNIKFLYSVGLTRKCLCRLLTNAPRTFSNSLDLNKQMVEFLQAAGLSLGHNDPADFVRKIILKTLYLIQSTKRVKANIEFLRSTFNLNSEELLVLICGPGAEILDLSNDYARRSYANIKEKLFSLGCTEEEVQKFVLSYPDVIFLAEKKFNDKIDCLMEENISISQIIENPRVLDSSISTLKSRIKELVNAGCNLSTLNITLLSWSKKRYEAKLKKLSRFA.

A mitochondrion-targeting transit peptide spans 1-57 (MQSLSLGQTSISKGLNYLTIMAPGNLWHMRNNFLFGSRCWMTRFSAENIFKSVSFRL). 5 interaction with DNA regions span residues 169–170 (RS), 246–250 (QSTKR), 323–330 (AEKKFNDK), 354–357 (SIST), and 383–390 (SKKRYEAK).

The protein belongs to the mTERF family. As to quaternary structure, monomer. In terms of processing, phosphoprotein with mostly four phosphate groups. While the DNA-binding activity is unaffected by the phosphorylation state, only the phosphorylated form of the protein is active for termination activity. Functioning seems to be regulated by phosphorylation.

It localises to the mitochondrion. Functionally, transcription termination factor. Binds to a 28 bp region within the tRNA(Leu(uur)) gene at a position immediately adjacent to and downstream of the 16S rRNA gene; this region comprises a tridecamer sequence critical for directing accurate termination. Binds DNA along the major grove and promotes DNA bending and partial unwinding. Promotes base flipping. Transcription termination activity appears to be polarized with highest specificity for transcripts initiated on the light strand. The chain is Transcription termination factor 1, mitochondrial (MTERF1) from Pongo abelii (Sumatran orangutan).